Reading from the N-terminus, the 132-residue chain is Fatty acid-binding protein 9 (132 aa).

Phosphoserine is present on residues Ser13, Ser14, Ser40, Ser42, Ser44, and Ser91.

This sequence belongs to the calycin superfamily. Fatty-acid binding protein (FABP) family. Testis.

It is found in the cytoplasm. The chain is Fatty acid-binding protein 9 (Fabp9) from Mus musculus (Mouse).